Here is a 204-residue protein sequence, read N- to C-terminus: Large ribosomal subunit protein eL15 (204 aa).

It belongs to the eukaryotic ribosomal protein eL15 family. In terms of assembly, component of the large ribosomal subunit.

The protein localises to the cytoplasm. Component of the large ribosomal subunit. The ribosome is a large ribonucleoprotein complex responsible for the synthesis of proteins in the cell. This Siniperca knerii (Big-eye mandarin fish) protein is Large ribosomal subunit protein eL15 (rpl15).